The following is a 787-amino-acid chain: Vacuolar protein sorting-associated protein 35A (787 aa).

M1 bears the N-acetylmethionine mark.

This sequence belongs to the VPS35 family. Component of the retromer complex which consists of VPS29 (MAG1), VPS26 (VPS26A or VPS26B), VPS35 (VPS35A or VPS35B or VPS35C), VPS5/17 (SNX1 or SNX2A or SNX2B). Component of a retromer subcomplex consisting of VPS29 (MAG1), VPS26 (VPS26A or VPS26B), VPS35 (VPS35A or VPS35B or VPS35C). Interacts with RABG3F.

It localises to the cytoplasm. It is found in the endosome membrane. Its subcellular location is the prevacuolar compartment membrane. The protein localises to the golgi apparatus. The protein resides in the trans-Golgi network membrane. Its function is as follows. Plays a role in vesicular protein sorting. Component of the membrane-associated retromer complex which is essential in endosome-to-Golgi retrograde transport. Also involved in the efficient sorting of seed storage proteins. Binds alone to endosomal membranes and is required for recruitment of VPS26 and VPS29 to membrane. The VPS29-VPS26-VPS35 subcomplex may be involved in recycling of specific cargos from endosome to the plasma membrane. The polypeptide is Vacuolar protein sorting-associated protein 35A (VPS35A) (Arabidopsis thaliana (Mouse-ear cress)).